Here is a 270-residue protein sequence, read N- to C-terminus: ATP synthase subunit a (270 aa).

Helical transmembrane passes span 38 to 58 (VHID…GIFY), 98 to 118 (IAPL…MDLV), 143 to 163 (DVNI…YYSI), 208 to 228 (LFGN…MLPW), and 239 to 259 (AIFH…LTIV).

It belongs to the ATPase A chain family. F-type ATPases have 2 components, CF(1) - the catalytic core - and CF(0) - the membrane proton channel. CF(1) has five subunits: alpha(3), beta(3), gamma(1), delta(1), epsilon(1). CF(0) has three main subunits: a(1), b(2) and c(9-12). The alpha and beta chains form an alternating ring which encloses part of the gamma chain. CF(1) is attached to CF(0) by a central stalk formed by the gamma and epsilon chains, while a peripheral stalk is formed by the delta and b chains.

The protein resides in the cell inner membrane. Its function is as follows. Key component of the proton channel; it plays a direct role in the translocation of protons across the membrane. The sequence is that of ATP synthase subunit a from Vibrio alginolyticus.